A 389-amino-acid polypeptide reads, in one-letter code: Chalcone synthase 1 (389 aa).

Residue Cys164 is part of the active site.

The protein belongs to the thiolase-like superfamily. Chalcone/stilbene synthases family.

It carries out the reaction (E)-4-coumaroyl-CoA + 3 malonyl-CoA + 3 H(+) = 2',4,4',6'-tetrahydroxychalcone + 3 CO2 + 4 CoA. Its pathway is secondary metabolite biosynthesis; flavonoid biosynthesis. Functionally, the primary product of this enzyme is 4,2',4',6'-tetrahydroxychalcone (also termed naringenin-chalcone or chalcone) which can under specific conditions spontaneously isomerize into naringenin. This Camellia sinensis (Tea plant) protein is Chalcone synthase 1 (CHS1).